The sequence spans 121 residues: Basic phospholipase A2 BbTX-III (121 aa).

Residues Tyr27, Gly29, and Gly31 each contribute to the Ca(2+) site. Intrachain disulfides connect Cys28–Cys44, Cys43–Cys95, Cys49–Cys121, Cys50–Cys88, Cys58–Cys82, and Cys76–Cys86. His47 is an active-site residue. Asp48 is a binding site for Ca(2+). The active site involves Asp89.

Belongs to the phospholipase A2 family. Group II subfamily. D49 sub-subfamily. As to quaternary structure, homodimer; non-covalently linked. Ca(2+) is required as a cofactor. In terms of tissue distribution, expressed by the venom gland.

It localises to the secreted. The catalysed reaction is a 1,2-diacyl-sn-glycero-3-phosphocholine + H2O = a 1-acyl-sn-glycero-3-phosphocholine + a fatty acid + H(+). Functionally, snake venom phospholipase A2 (PLA2) that exhibits myotoxin and anticoagulant activity. Displays edema-inducing activities in mouse paw. Also displays cytotoxic activity against some cell lines and myotubes, and antimicrobial activities against E.coli, C.albicans and Leishmania. PLA2 catalyzes the calcium-dependent hydrolysis of the 2-acyl groups in 3-sn-phosphoglycerides. This is Basic phospholipase A2 BbTX-III from Bothrops brazili (Brazil's lancehead).